Consider the following 466-residue polypeptide: MVFLSGNASDSSNCTQPPAPVNIPKAILLGVILGVLILFGVPGNILVILSVACHRHLHSVTHYYIVNLAVADLLLTSTVLPFSAIFEILGYWAFGRVFCNIWAAVDVLCCTASIMSLCIISIDRYIGVSYPLRYPTIVTQRRGLRALLCLWALSLVISIGPLFGWRQPAPQDETICQINEDPSYVLFSALGSFYVPLAIILVMYCRVYVVAKRESRGLTSGLKTDKSDSEQVTLRIHRKNAPLGGSGVASSKNKTHFSVRLLKFSREKKAAKTLGIVVGCFVLCWLPFFLVMPIGSFFPDFKPSETVFKIVFWLGYLNSCINPIIYPCSSQEFKKAFQNVLKIQCLRRKQSSKHALGYTLHPPSQAVEGQHKDMVRIPVGSRETFYKISKTDGVCEWKFFSSMPRGSARITVPKDQSACTTARVRSKSFLQVCCCVGPSTPNPGENHQVPTIKIHTISLSENGEEV.

The Extracellular portion of the chain corresponds to 1 to 25 (MVFLSGNASDSSNCTQPPAPVNIPK). Residues N7 and N13 are each glycosylated (N-linked (GlcNAc...) asparagine). The chain crosses the membrane as a helical span at residues 26 to 51 (AILLGVILGVLILFGVPGNILVILSV). Topologically, residues 52 to 63 (ACHRHLHSVTHY) are cytoplasmic. Residues 64-89 (YIVNLAVADLLLTSTVLPFSAIFEIL) traverse the membrane as a helical segment. The Extracellular segment spans residues 90-99 (GYWAFGRVFC). The helical transmembrane segment at 100 to 122 (NIWAAVDVLCCTASIMSLCIISI) threads the bilayer. Residues 123-143 (DRYIGVSYPLRYPTIVTQRRG) are Cytoplasmic-facing. The chain crosses the membrane as a helical span at residues 144 to 168 (LRALLCLWALSLVISIGPLFGWRQP). Residues 169 to 181 (APQDETICQINED) are Extracellular-facing. The helical transmembrane segment at 182–205 (PSYVLFSALGSFYVPLAIILVMYC) threads the bilayer. Over 206 to 272 (RVYVVAKRES…KFSREKKAAK (67 aa)) the chain is Cytoplasmic. The chain crosses the membrane as a helical span at residues 273-297 (TLGIVVGCFVLCWLPFFLVMPIGSF). Over 298–304 (FPDFKPS) the chain is Extracellular. Residues 305-329 (ETVFKIVFWLGYLNSCINPIIYPCS) traverse the membrane as a helical segment. The Cytoplasmic segment spans residues 330-466 (SQEFKKAFQN…ISLSENGEEV (137 aa)). A Nuclear localization signal motif is present at residues 334–349 (KKAFQNVLKIQCLRRK). C345 carries S-palmitoyl cysteine lipidation.

This sequence belongs to the G-protein coupled receptor 1 family. Adrenergic receptor subfamily. ADRA1A sub-subfamily. In terms of assembly, homo- and heterooligomer. Heterooligomerizes with ADRA1B homooligomers in cardiac myocytes. Interacts with CAVIN4.

Its subcellular location is the nucleus membrane. It is found in the cell membrane. It localises to the cytoplasm. The protein resides in the membrane. The protein localises to the caveola. Functionally, this alpha-adrenergic receptor mediates its action by association with G proteins that activate a phosphatidylinositol-calcium second messenger system. Its effect is mediated by G(q) and G(11) proteins. Nuclear ADRA1A-ADRA1B heterooligomers regulate phenylephrine (PE)-stimulated ERK signaling in cardiac myocytes. In Cavia porcellus (Guinea pig), this protein is Alpha-1A adrenergic receptor (ADRA1A).